Reading from the N-terminus, the 339-residue chain is tRNA(Ile)-lysidine synthase (339 aa).

Ser34 to Ser39 serves as a coordination point for ATP.

Belongs to the tRNA(Ile)-lysidine synthase family.

The protein resides in the cytoplasm. It carries out the reaction cytidine(34) in tRNA(Ile2) + L-lysine + ATP = lysidine(34) in tRNA(Ile2) + AMP + diphosphate + H(+). Its function is as follows. Ligates lysine onto the cytidine present at position 34 of the AUA codon-specific tRNA(Ile) that contains the anticodon CAU, in an ATP-dependent manner. Cytidine is converted to lysidine, thus changing the amino acid specificity of the tRNA from methionine to isoleucine. The chain is tRNA(Ile)-lysidine synthase from Methylobacterium nodulans (strain LMG 21967 / CNCM I-2342 / ORS 2060).